Consider the following 157-residue polypeptide: AP-1 complex subunit sigma-2 (157 aa).

Belongs to the adaptor complexes small subunit family. Adaptor protein complex 1 (AP-1) is a heterotetramer composed of two large adaptins (gamma-type subunit AP1G1 and beta-type subunit AP1B1), a medium adaptin (mu-type subunit AP1M1 or AP1M2) and a small adaptin (sigma-type subunit AP1S1 or AP1S2 or AP1S3). Binds to MUC1. As to expression, widely expressed.

Its subcellular location is the golgi apparatus. It localises to the cytoplasmic vesicle membrane. The protein localises to the membrane. It is found in the clathrin-coated pit. Its function is as follows. Subunit of clathrin-associated adaptor protein complex 1 that plays a role in protein sorting in the late-Golgi/trans-Golgi network (TGN) and/or endosomes. The AP complexes mediate both the recruitment of clathrin to membranes and the recognition of sorting signals within the cytosolic tails of transmembrane cargo molecules. This chain is AP-1 complex subunit sigma-2 (AP1S2), found in Homo sapiens (Human).